The primary structure comprises 434 residues: Serine/threonine transporter SstT (434 aa).

A run of 9 helical transmembrane segments spans residues isoleucine 14–isoleucine 34, phenylalanine 41–isoleucine 61, phenylalanine 72–alanine 92, alanine 135–leucine 155, threonine 172–leucine 192, leucine 210–valine 230, isoleucine 282–methionine 302, isoleucine 316–isoleucine 336, and phenylalanine 351–valine 371. Residues lysine 414–valine 434 form a disordered region.

Belongs to the dicarboxylate/amino acid:cation symporter (DAACS) (TC 2.A.23) family.

Its subcellular location is the cell membrane. It catalyses the reaction L-serine(in) + Na(+)(in) = L-serine(out) + Na(+)(out). The enzyme catalyses L-threonine(in) + Na(+)(in) = L-threonine(out) + Na(+)(out). Involved in the import of serine and threonine into the cell, with the concomitant import of sodium (symport system). This chain is Serine/threonine transporter SstT, found in Lacticaseibacillus paracasei (strain ATCC 334 / BCRC 17002 / CCUG 31169 / CIP 107868 / KCTC 3260 / NRRL B-441) (Lactobacillus paracasei).